Here is a 147-residue protein sequence, read N- to C-terminus: Protein LOL4 (147 aa).

Putative zinc finger stretches follow at residues 4–34 (QLIC…LTAV), 44–74 (ELIC…LNST), and 82–112 (HLTC…VNHV).

The protein localises to the nucleus. Its function is as follows. Putative zinc finger that may be involved in programmed cell death and defense response. This chain is Protein LOL4 (LOL4), found in Oryza sativa subsp. japonica (Rice).